Reading from the N-terminus, the 133-residue chain is MRGFIANSLKPHMRSFALRRSFTSSRILRKVNAVESFGDYNTRISADKVTVVDFYADWCGPCKYLKPFLEKLSEQNQKASFIAVNADKFSDIAQKNGVYALPTMVLFRKGQELDRIVGADVKTLSSLLAKYQE.

The N-terminal 29 residues, 1–29 (MRGFIANSLKPHMRSFALRRSFTSSRILR), are a transit peptide targeting the mitochondrion. Residues 30-133 (KVNAVESFGD…LSSLLAKYQE (104 aa)) form the Thioredoxin domain. Catalysis depends on nucleophile residues C59 and C62. C59 and C62 are oxidised to a cystine.

It belongs to the thioredoxin family. As to quaternary structure, interacts with arg3.

The protein resides in the mitochondrion. Its function is as follows. Disulfide reductase which serves multiple functions in mitochondria, protecting mitochondrial components against thiol-oxidative damage as a thiol-disulfide oxidoreductase, and supporting urea cycle and respiration in mitochondria in a manner independent of active site thiols. In Schizosaccharomyces pombe (strain 972 / ATCC 24843) (Fission yeast), this protein is Thioredoxin-2, mitochondrial (trx2).